The sequence spans 283 residues: ATP phosphoribosyltransferase (283 aa).

This sequence belongs to the ATP phosphoribosyltransferase family. Long subfamily. It depends on Mg(2+) as a cofactor.

The protein localises to the cytoplasm. The catalysed reaction is 1-(5-phospho-beta-D-ribosyl)-ATP + diphosphate = 5-phospho-alpha-D-ribose 1-diphosphate + ATP. Its pathway is amino-acid biosynthesis; L-histidine biosynthesis; L-histidine from 5-phospho-alpha-D-ribose 1-diphosphate: step 1/9. Feedback inhibited by histidine. Functionally, catalyzes the condensation of ATP and 5-phosphoribose 1-diphosphate to form N'-(5'-phosphoribosyl)-ATP (PR-ATP). Has a crucial role in the pathway because the rate of histidine biosynthesis seems to be controlled primarily by regulation of HisG enzymatic activity. The polypeptide is ATP phosphoribosyltransferase (Phocaeicola vulgatus (strain ATCC 8482 / DSM 1447 / JCM 5826 / CCUG 4940 / NBRC 14291 / NCTC 11154) (Bacteroides vulgatus)).